The sequence spans 87 residues: Large ribosomal subunit protein bL27 (87 aa).

A disordered region spans residues 1 to 21; sequence MAHKKAGGSSRNGRDSESKRL.

The protein belongs to the bacterial ribosomal protein bL27 family.

The sequence is that of Large ribosomal subunit protein bL27 from Burkholderia mallei (strain NCTC 10247).